Consider the following 961-residue polypeptide: Glycine dehydrogenase (decarboxylating) (961 aa).

Position 709 is an N6-(pyridoxal phosphate)lysine (Lys-709).

It belongs to the GcvP family. In terms of assembly, the glycine cleavage system is composed of four proteins: P, T, L and H. It depends on pyridoxal 5'-phosphate as a cofactor.

The enzyme catalyses N(6)-[(R)-lipoyl]-L-lysyl-[glycine-cleavage complex H protein] + glycine + H(+) = N(6)-[(R)-S(8)-aminomethyldihydrolipoyl]-L-lysyl-[glycine-cleavage complex H protein] + CO2. Functionally, the glycine cleavage system catalyzes the degradation of glycine. The P protein binds the alpha-amino group of glycine through its pyridoxal phosphate cofactor; CO(2) is released and the remaining methylamine moiety is then transferred to the lipoamide cofactor of the H protein. The polypeptide is Glycine dehydrogenase (decarboxylating) (Teredinibacter turnerae (strain ATCC 39867 / T7901)).